The sequence spans 40 residues: Serine proteinase-like BMK-CBP (40 aa).

The 40-residue stretch at 1 to 40 (IFGGTFAKNGEYPWMVVIDLPEFACGGVLISKKFVLTAAH) folds into the Peptidase S1 domain. Catalysis depends on His-40, which acts as the Charge relay system.

This sequence belongs to the peptidase S1 family. As to expression, expressed by the venom gland.

The protein localises to the secreted. Binds in a dose-dependent manner to the breast cancer cell line MCF-7. This is Serine proteinase-like BMK-CBP from Olivierus martensii (Manchurian scorpion).